The following is a 136-amino-acid chain: MLSPKKQKYRKAQKGRVASKAKAGTMIAFGEFGLKSLDSCRITSRQIEAARRAAVRCMKRQGKFWINIFPSIPVSKKPTEVRMGKGKGATEFFAARVAVGRILFELDGVSESIAIKALELAGAKLPVRTKIVKRYE.

This sequence belongs to the universal ribosomal protein uL16 family. Part of the 50S ribosomal subunit.

Its function is as follows. Binds 23S rRNA and is also seen to make contacts with the A and possibly P site tRNAs. The sequence is that of Large ribosomal subunit protein uL16 from Orientia tsutsugamushi (strain Boryong) (Rickettsia tsutsugamushi).